The following is a 388-amino-acid chain: Succinate--CoA ligase [ADP-forming] subunit beta (388 aa).

The ATP-grasp domain maps to 9–245 (KELLKSYGLP…KSQENERELK (237 aa)). ATP-binding positions include K46, 53 to 55 (GRG), E100, Y103, and E108. Mg(2+)-binding residues include N200 and D214. Substrate contacts are provided by residues N265 and 322–324 (GIV).

Belongs to the succinate/malate CoA ligase beta subunit family. In terms of assembly, heterotetramer of two alpha and two beta subunits. Requires Mg(2+) as cofactor.

The catalysed reaction is succinate + ATP + CoA = succinyl-CoA + ADP + phosphate. The enzyme catalyses GTP + succinate + CoA = succinyl-CoA + GDP + phosphate. The protein operates within carbohydrate metabolism; tricarboxylic acid cycle; succinate from succinyl-CoA (ligase route): step 1/1. Functionally, succinyl-CoA synthetase functions in the citric acid cycle (TCA), coupling the hydrolysis of succinyl-CoA to the synthesis of either ATP or GTP and thus represents the only step of substrate-level phosphorylation in the TCA. The beta subunit provides nucleotide specificity of the enzyme and binds the substrate succinate, while the binding sites for coenzyme A and phosphate are found in the alpha subunit. The sequence is that of Succinate--CoA ligase [ADP-forming] subunit beta from Psychrobacter arcticus (strain DSM 17307 / VKM B-2377 / 273-4).